Reading from the N-terminus, the 466-residue chain is MSKTLYQKLYDAHVVYSAPEETPLLYIDRHLVHEVTSPQAFDGLRAMGRKVRQPGKTFATMDHNVSTQTKDINASGEMARIQMQELIKNCEEFGVLLYDLNHPYQGIVHVIGPEQGMTLPGMTIVCGDSHTATHGAFGSLAFGIGTSEVEHVLATQTLKQGRAKTMKIEVTGDAAEGITAKDIVLAVIGKTGSAGGTGHVVEFCGKAIQALSMEGRMTLCNMAIEMGAKAGLVAPDDTTFDYLKGRQFAPTGSNWEQAVAYWRTLKSDDDAKFDTVVTLRAEDIAPQVTWGTNPGQVIAVNQTIPAPESFSDPGERASAEKALAYMDLKPGIKLTEVPIDKVFIGSCTNSRIEDLRAAAAIAKGRKVASGVQAIVVPGSGPVKAQAEAEGLDKIFIDAGFEWRLPGCSMCLAMNNDRLNPGERCASTSNRNFEGRQGRGGRTHLVSPAMAAAAAIAGHFADIRDIH.

Residues Cys347, Cys407, and Cys410 each coordinate [4Fe-4S] cluster.

It belongs to the aconitase/IPM isomerase family. LeuC type 1 subfamily. In terms of assembly, heterodimer of LeuC and LeuD. The cofactor is [4Fe-4S] cluster.

It carries out the reaction (2R,3S)-3-isopropylmalate = (2S)-2-isopropylmalate. It functions in the pathway amino-acid biosynthesis; L-leucine biosynthesis; L-leucine from 3-methyl-2-oxobutanoate: step 2/4. Catalyzes the isomerization between 2-isopropylmalate and 3-isopropylmalate, via the formation of 2-isopropylmaleate. The polypeptide is 3-isopropylmalate dehydratase large subunit (Serratia proteamaculans (strain 568)).